A 434-amino-acid chain; its full sequence is MASFVIEGGHRLSGEIHPQGAKNEVLQIICATLLTAEEVTVNNIPDILDVNNLIQLMRDMGVTVAKTGVDSYSFKAANVDLAYLESDNFLKKCSSLRGSVMLIGPMVARFGKAMISKPGGDKIGRRRLDTHFIGIQNLGADFTYNEEREIYEISAEELKGTSMLLDEASVTGTANIVMAAVLAKGKTTIYNAACEPYLQQLCKMLNRMGAKISGIASNLLTIEGVEELHGTDHTVLPDMIEVGSFIGMAAMTRSEITIKNVSYENLGIIPESFRRLGIKLEQRGDDIFVPAQDCYQIESFIDGSIMTIADAPWPGLTPDLLSVMLVVATQAKGSVLIHQKMFESRLFFVDKLIDMGAQIILCDPHRAVVIGHNHGFTLRGGNMTSPDIRAGIALLIAAMSAEGISRIHNIEQIDRGYQNIEGRLNAIGARITRI.

22–23 (KN) is a binding site for phosphoenolpyruvate. UDP-N-acetyl-alpha-D-glucosamine is bound at residue Arg97. Residue Asp121 is the Proton donor of the active site. The UDP-N-acetyl-alpha-D-glucosamine site is built by Asp319 and Met341.

This sequence belongs to the EPSP synthase family. MurA subfamily.

It localises to the cytoplasm. It catalyses the reaction phosphoenolpyruvate + UDP-N-acetyl-alpha-D-glucosamine = UDP-N-acetyl-3-O-(1-carboxyvinyl)-alpha-D-glucosamine + phosphate. Its pathway is cell wall biogenesis; peptidoglycan biosynthesis. In terms of biological role, cell wall formation. Adds enolpyruvyl to UDP-N-acetylglucosamine. This chain is UDP-N-acetylglucosamine 1-carboxyvinyltransferase, found in Bacteroides fragilis (strain ATCC 25285 / DSM 2151 / CCUG 4856 / JCM 11019 / LMG 10263 / NCTC 9343 / Onslow / VPI 2553 / EN-2).